Reading from the N-terminus, the 401-residue chain is Nicotinate phosphoribosyltransferase (401 aa).

The residue at position 221 (histidine 221) is a Phosphohistidine; by autocatalysis.

This sequence belongs to the NAPRTase family. Transiently phosphorylated on a His residue during the reaction cycle. Phosphorylation strongly increases the affinity for substrates and increases the rate of nicotinate D-ribonucleotide production. Dephosphorylation regenerates the low-affinity form of the enzyme, leading to product release.

It catalyses the reaction nicotinate + 5-phospho-alpha-D-ribose 1-diphosphate + ATP + H2O = nicotinate beta-D-ribonucleotide + ADP + phosphate + diphosphate. It functions in the pathway cofactor biosynthesis; NAD(+) biosynthesis; nicotinate D-ribonucleotide from nicotinate: step 1/1. Its function is as follows. Catalyzes the synthesis of beta-nicotinate D-ribonucleotide from nicotinate and 5-phospho-D-ribose 1-phosphate at the expense of ATP. The sequence is that of Nicotinate phosphoribosyltransferase from Edwardsiella ictaluri (strain 93-146).